Here is a 346-residue protein sequence, read N- to C-terminus: Elongation factor Ts (346 aa).

Positions 80–83 are involved in Mg(2+) ion dislocation from EF-Tu; sequence TDFV.

This sequence belongs to the EF-Ts family.

The protein localises to the cytoplasm. Associates with the EF-Tu.GDP complex and induces the exchange of GDP to GTP. It remains bound to the aminoacyl-tRNA.EF-Tu.GTP complex up to the GTP hydrolysis stage on the ribosome. In Streptococcus pyogenes serotype M18 (strain MGAS8232), this protein is Elongation factor Ts.